Here is a 420-residue protein sequence, read N- to C-terminus: Pyridinium-3,5-bisthiocarboxylic acid mononucleotide nickel insertion protein (420 aa).

The protein belongs to the LarC family.

It carries out the reaction Ni(II)-pyridinium-3,5-bisthiocarboxylate mononucleotide = pyridinium-3,5-bisthiocarboxylate mononucleotide + Ni(2+). Its function is as follows. Involved in the biosynthesis of a nickel-pincer cofactor ((SCS)Ni(II) pincer complex). Binds Ni(2+), and functions in nickel delivery to pyridinium-3,5-bisthiocarboxylic acid mononucleotide (P2TMN), to form the mature cofactor. Is required for the activation of the lactate racemase LarA. May also be involved in the activation of other nickel-pincer cofactor-dependent enzymes. This chain is Pyridinium-3,5-bisthiocarboxylic acid mononucleotide nickel insertion protein, found in Lactiplantibacillus plantarum (strain ATCC BAA-793 / NCIMB 8826 / WCFS1) (Lactobacillus plantarum).